Here is a 243-residue protein sequence, read N- to C-terminus: Uridylate kinase (243 aa).

Position 14–17 (Lys14–Gly17) interacts with ATP. Residue Gly57 coordinates UMP. The ATP site is built by Gly58 and Arg62. Residues Asp77 and Thr139 to Thr146 each bind UMP. Residues Asn167, Tyr173, and Asp176 each contribute to the ATP site.

Belongs to the UMP kinase family. Homohexamer.

It localises to the cytoplasm. It catalyses the reaction UMP + ATP = UDP + ADP. The protein operates within pyrimidine metabolism; CTP biosynthesis via de novo pathway; UDP from UMP (UMPK route): step 1/1. Inhibited by UTP. Its function is as follows. Catalyzes the reversible phosphorylation of UMP to UDP. This chain is Uridylate kinase, found in Mycoplasmopsis pulmonis (strain UAB CTIP) (Mycoplasma pulmonis).